A 485-amino-acid polypeptide reads, in one-letter code: Glutamyl-tRNA(Gln) amidotransferase subunit A (485 aa).

Residues lysine 79 and serine 154 each act as charge relay system in the active site. The active-site Acyl-ester intermediate is serine 178.

The protein belongs to the amidase family. GatA subfamily. Heterotrimer of A, B and C subunits.

The enzyme catalyses L-glutamyl-tRNA(Gln) + L-glutamine + ATP + H2O = L-glutaminyl-tRNA(Gln) + L-glutamate + ADP + phosphate + H(+). Functionally, allows the formation of correctly charged Gln-tRNA(Gln) through the transamidation of misacylated Glu-tRNA(Gln) in organisms which lack glutaminyl-tRNA synthetase. The reaction takes place in the presence of glutamine and ATP through an activated gamma-phospho-Glu-tRNA(Gln). In Geobacillus thermodenitrificans (strain NG80-2), this protein is Glutamyl-tRNA(Gln) amidotransferase subunit A.